Reading from the N-terminus, the 284-residue chain is tRNA-cytidine(32) 2-sulfurtransferase (284 aa).

Positions 1–11 are enriched in polar residues; the sequence is MTFHQPVSETA. The disordered stretch occupies residues 1 to 20; it reads MTFHQPVSETAQPDEASGHP. Residues 63-68 carry the PP-loop motif motif; sequence SGGKDS. [4Fe-4S] cluster is bound by residues C138, C141, and C229.

Belongs to the TtcA family. As to quaternary structure, homodimer. It depends on Mg(2+) as a cofactor. [4Fe-4S] cluster serves as cofactor.

Its subcellular location is the cytoplasm. The enzyme catalyses cytidine(32) in tRNA + S-sulfanyl-L-cysteinyl-[cysteine desulfurase] + AH2 + ATP = 2-thiocytidine(32) in tRNA + L-cysteinyl-[cysteine desulfurase] + A + AMP + diphosphate + H(+). The protein operates within tRNA modification. In terms of biological role, catalyzes the ATP-dependent 2-thiolation of cytidine in position 32 of tRNA, to form 2-thiocytidine (s(2)C32). The sulfur atoms are provided by the cysteine/cysteine desulfurase (IscS) system. This is tRNA-cytidine(32) 2-sulfurtransferase from Chelativorans sp. (strain BNC1).